The primary structure comprises 408 residues: Cytochrome P450 55A3 (408 aa).

Position 357 (Cys-357) interacts with heme.

Belongs to the cytochrome P450 family. The cofactor is heme.

In Fusarium lichenicola (Cylindrocarpon lichenicola), this protein is Cytochrome P450 55A3 (CYP55A3).